The following is a 104-amino-acid chain: Small ribosomal subunit protein uS10 (104 aa).

It belongs to the universal ribosomal protein uS10 family. As to quaternary structure, part of the 30S ribosomal subunit.

Its function is as follows. Involved in the binding of tRNA to the ribosomes. The protein is Small ribosomal subunit protein uS10 of Ralstonia nicotianae (strain ATCC BAA-1114 / GMI1000) (Ralstonia solanacearum).